Consider the following 379-residue polypeptide: Cytochrome b (379 aa).

4 helical membrane passes run 32–52 (FGSLLGLCLATQILTGLFLAM), 76–97 (WLIRNMHANGASFFFICIYMHI), 112–132 (WNVGVILLLLVMMTAFVGYVL), and 177–197 (FFAFHFLFPFVIAAVTVIHLL). Heme b is bound by residues histidine 82 and histidine 96. Histidine 181 and histidine 195 together coordinate heme b. Residue histidine 200 participates in a ubiquinone binding. 4 helical membrane-spanning segments follow: residues 225–245 (YKDLLGFIIMMVALTSLALFS), 287–307 (LGGVLALLASILVLMLVPFLH), 319–339 (LTQILFWTFVANVIILTWIGG), and 346–366 (FIIIGQVASFLYFLLLLVLSP).

This sequence belongs to the cytochrome b family. The cytochrome bc1 complex contains 3 respiratory subunits (MT-CYB, CYC1 and UQCRFS1), 2 core proteins (UQCRC1 and UQCRC2) and probably 6 low-molecular weight proteins. Heme b is required as a cofactor.

It is found in the mitochondrion inner membrane. Functionally, component of the ubiquinol-cytochrome c reductase complex (complex III or cytochrome b-c1 complex) that is part of the mitochondrial respiratory chain. The b-c1 complex mediates electron transfer from ubiquinol to cytochrome c. Contributes to the generation of a proton gradient across the mitochondrial membrane that is then used for ATP synthesis. This Chlorophthalmus agassizi (Shortnose greeneye) protein is Cytochrome b (mt-cyb).